Consider the following 345-residue polypeptide: MTEKTSLSYKDAGVDIDAGNALVDRIKGVVKKTRRPEVMGGLGGFGALCALPQKYREPVLVSGTDGVGTKLRLAMDLQRHDTIGIDLVAMCVNDLVVQGAEPLFFLDYYATGKLDVDTASSVISGIAEGCLQSGCALVGGETAEMPGMYHGEDYDVAGFCVGVVEKSEIIDGTKVTDGDVLIALGSSGPHSNGYSLVRKILEVSGCDPQTTQLAGKPLADHLLAPTRIYVKSVLELIDKVDVHAIAHLTGGGFWENIPRVLPENTQAVIDESSWQWPEVFNWLQTAGNVSRHEMYRTFNCGVGMIIALPEAEVENALALLNANGEKAWKIGVIKASDAEQRVVIA.

It belongs to the AIR synthase family.

The protein localises to the cytoplasm. The enzyme catalyses 2-formamido-N(1)-(5-O-phospho-beta-D-ribosyl)acetamidine + ATP = 5-amino-1-(5-phospho-beta-D-ribosyl)imidazole + ADP + phosphate + H(+). It functions in the pathway purine metabolism; IMP biosynthesis via de novo pathway; 5-amino-1-(5-phospho-D-ribosyl)imidazole from N(2)-formyl-N(1)-(5-phospho-D-ribosyl)glycinamide: step 2/2. This is Phosphoribosylformylglycinamidine cyclo-ligase from Escherichia fergusonii (strain ATCC 35469 / DSM 13698 / CCUG 18766 / IAM 14443 / JCM 21226 / LMG 7866 / NBRC 102419 / NCTC 12128 / CDC 0568-73).